We begin with the raw amino-acid sequence, 782 residues long: Zinc finger and SCAN domain-containing protein 10 (782 aa).

Residues 1 to 37 are disordered; it reads MLAEPVPDALEQEHPGAVKLEEDEVGEEDPRLAESRP. Residues 1–71 enclose the SCAN box domain; it reads MLAEPVPDAL…GRLRELCNHW (71 aa). Basic and acidic residues-rich tracts occupy residues 11–20 and 28–37; these read EQEHPGAVKL and EDPRLAESRP. Phosphoserine is present on residues Ser160 and Ser206. 2 disordered regions span residues 197–233 and 290–321; these read LAPS…ENSR and SQTE…TPAD. C2H2-type zinc fingers lie at residues 292–315, 321–343, 349–371, 377–399, 421–443, 467–489, 495–517, 523–545, 551–573, 579–601, 607–629, 635–657, 669–691, and 697–719; these read TEKP…STGW, DGSE…EMQF, GVNF…NLQP, SFRC…HMRT, LTKH…NQGF, EGKT…TFKR, RHLR…SLSS, PYVC…HTRR, RPFS…SHQQ, KPHA…RHLL, RPYH…RHVR, KPCR…RHQR, ICGH…TGER, and TCGR…TGSK. The span at 302–313 shows a compositional bias: polar residues; sequence LTQTVGQETSST. Position 485 is an N5-methylglutamine (Gln485). A disordered region spans residues 491-522; the sequence is SSLKRHLRNHAKDKDHLSSEDPGSLSSSQESN. The span at 500–509 shows a compositional bias: basic and acidic residues; it reads HAKDKDHLSS. The span at 510–521 shows a compositional bias: low complexity; it reads EDPGSLSSSQES.

In terms of assembly, interacts with POU5F1/OCT4 and SOX2. Methylated at Gln-485 by N6AMT1. As to expression, embryonic stem (ES) cell-specific. Not expressed in adult, except in testis.

The protein localises to the nucleus. Embryonic stem (ES) cell-specific transcription factor required to maintain ES cell pluripotency. Can both activate and /or repress expression of target genes, depending on the context. Specifically binds the 5'-[GA]CGCNNGCG[CT]-3' DNA consensus sequence. Regulates expression of POU5F1/OCT4, ZSCAN4 and ALYREF/THOC4. The protein is Zinc finger and SCAN domain-containing protein 10 (Zscan10) of Mus musculus (Mouse).